The following is a 206-amino-acid chain: MQKKLDSLLKAAGITLPDRQKQQLLGYVGMLDKWNKAYNLTSVRDPQQMLVRHILDSIVVNPHLQGKRFIDVGTGPGLPGIPLAIVRPDSHFTLLDSLGKRVRFLRQVQHELGLTNVEPVQSRVEEFPAEPPFDGVISRAFASLQDMLSWCHHLPAKGQGRFYALKGVRPDEELTQLPPGIELESVVRLQVPELEGERHLVILKAN.

S-adenosyl-L-methionine-binding positions include G73, L78, 124–125 (VE), and R139.

This sequence belongs to the methyltransferase superfamily. RNA methyltransferase RsmG family.

Its subcellular location is the cytoplasm. The catalysed reaction is guanosine(527) in 16S rRNA + S-adenosyl-L-methionine = N(7)-methylguanosine(527) in 16S rRNA + S-adenosyl-L-homocysteine. In terms of biological role, specifically methylates the N7 position of guanine in position 527 of 16S rRNA. The polypeptide is Ribosomal RNA small subunit methyltransferase G (Serratia proteamaculans (strain 568)).